Reading from the N-terminus, the 170-residue chain is uncharacterized protein (170 aa).

The Ferritin-like diiron domain maps to 1 to 148 (MVKSQKVIDV…TIHDFFENAT (148 aa)).

This is an uncharacterized protein from Ureaplasma parvum serovar 3 (strain ATCC 700970).